A 376-amino-acid polypeptide reads, in one-letter code: Homeobox protein extradenticle (376 aa).

Residues 16–35 form a disordered region; it reads APQGYSLSGQDDGQNTGNEN. Residues 20 to 34 are compositionally biased toward polar residues; it reads YSLSGQDDGQNTGNE. Residues 38–237 enclose the PBC domain; it reads RKQKDIGEIL…VMILRSRFLD (200 aa). The PBC-A stretch occupies residues 45 to 124; sequence EILQQIMSIS…EGVAGPEKGG (80 aa). Positions 127–237 are PBC-B; it reads AAAASAAAAS…VMILRSRFLD (111 aa). The segment at residues 238 to 300 is a DNA-binding region (homeobox; TALE-type); it reads ARRKRRNFSK…NKRIRYKKNI (63 aa). A compositionally biased stretch (low complexity) spans 318–335; sequence ASPYSMAGPPSGTTTPMM. Residues 318–376 are disordered; sequence ASPYSMAGPPSGTTTPMMSPAPPQDSMGYTMGSGGYDQQQPYDNSMGGYDPNLHQDLSP.

This sequence belongs to the TALE/PBX homeobox family. As to quaternary structure, interacts with Ubx and hth.

It localises to the nucleus. In terms of biological role, transcription factor which acts with the selector homeodomain proteins altering the regulation of downstream target genes such as wingless (wg), teashirt (tsh) and decapentaplegic (dpp), thus affecting segmental identity. Delimits the eye field and prevent inappropriate eye development. Required for proper localization of chordotonal organs within the peripheral nervous system. The chain is Homeobox protein extradenticle from Drosophila pseudoobscura pseudoobscura (Fruit fly).